A 557-amino-acid chain; its full sequence is Alpha-barbatene synthase (557 aa).

The (2E,6E)-farnesyl diphosphate site is built by arginine 273, aspartate 310, aspartate 314, arginine 451, and aspartate 454. Aspartate 310 and aspartate 314 together coordinate Mg(2+). The DDXXD motif signature appears at 310-314 (DDACD). Positions 454, 455, and 462 each coordinate Mg(2+).

The protein belongs to the terpene synthase family. Tpsa subfamily. Monomer. Mg(2+) is required as a cofactor. The cofactor is Mn(2+). As to expression, expressed exclusively in flowers. Expressed in intrafloral nectaries and in the funiculus within the ovules.

Its subcellular location is the cytoplasm. The enzyme catalyses (2E,6E)-farnesyl diphosphate = (+)-alpha-barbatene + diphosphate. It carries out the reaction (2E,6E)-farnesyl diphosphate = (+)-thujopsene + diphosphate. It catalyses the reaction (2E,6E)-farnesyl diphosphate = (+)-beta-chamigrene + diphosphate. The catalysed reaction is (2E,6E)-farnesyl diphosphate = (+)-beta-barbatene + diphosphate. The enzyme catalyses (2E,6E)-farnesyl diphosphate = beta-sesquiphellandrene + diphosphate. It carries out the reaction (2E,6E)-farnesyl diphosphate = (S)-beta-bisabolene + diphosphate. It catalyses the reaction (2E,6E)-farnesyl diphosphate = (-)-alpha-cuprenene + diphosphate. The catalysed reaction is (2E,6E)-farnesyl diphosphate = alpha-zingiberene + diphosphate. The enzyme catalyses (2E,6E)-farnesyl diphosphate = beta-acoradiene + diphosphate. It carries out the reaction (2E,6E)-farnesyl diphosphate = (E)-beta-farnesene + diphosphate. Its pathway is secondary metabolite biosynthesis; terpenoid biosynthesis. In terms of biological role, involved in the biosynthesis of over 15 sesquiterpenes (C15). The major products are (+)-alpha-barbatene (27.3%), (+)-thujopsene (17.8%) and (+)-beta-chamigrene (9.9%). Can use farnesyl diphosphate or geranyl diphosphate as substrates, but not geranylgeranyl diphosphate. This chain is Alpha-barbatene synthase, found in Arabidopsis thaliana (Mouse-ear cress).